We begin with the raw amino-acid sequence, 173 residues long: uncharacterized protein (173 aa).

This is an uncharacterized protein from Acanthamoeba polyphaga (Amoeba).